We begin with the raw amino-acid sequence, 76 residues long: Beta-defensin 121 (76 aa).

The first 15 residues, 1–15, serve as a signal peptide directing secretion; sequence MKLLLLLLTVTLLLA. 3 disulfide bridges follow: cysteine 23–cysteine 50, cysteine 30–cysteine 44, and cysteine 34–cysteine 51.

The protein belongs to the beta-defensin family. In terms of tissue distribution, abundant expression in the male reproductive tract only.

It is found in the secreted. In terms of biological role, has antibacterial activity. The sequence is that of Beta-defensin 121 (DEFB121) from Macaca mulatta (Rhesus macaque).